Consider the following 209-residue polypeptide: Large ribosomal subunit protein uL3 (209 aa).

Residue Gln150 is modified to N5-methylglutamine.

This sequence belongs to the universal ribosomal protein uL3 family. As to quaternary structure, part of the 50S ribosomal subunit. Forms a cluster with proteins L14 and L19. Post-translationally, methylated by PrmB.

Functionally, one of the primary rRNA binding proteins, it binds directly near the 3'-end of the 23S rRNA, where it nucleates assembly of the 50S subunit. This chain is Large ribosomal subunit protein uL3, found in Buchnera aphidicola subsp. Acyrthosiphon pisum (strain 5A).